The primary structure comprises 394 residues: Ribose-phosphate pyrophosphokinase 5, chloroplastic (394 aa).

The transit peptide at 1–33 (MASIVQPSPTFPALNLRRSSLIRPPSSVRFPLK) directs the protein to the chloroplast. Mg(2+) is bound by residues Asp-202, His-204, Asp-213, and Asp-217. Residues 288 to 303 (GKVAIMVDDMIDTAGT) form a binding of phosphoribosylpyrophosphate region.

This sequence belongs to the ribose-phosphate pyrophosphokinase family.

Its subcellular location is the plastid. It is found in the chloroplast. It carries out the reaction D-ribose 5-phosphate + ATP = 5-phospho-alpha-D-ribose 1-diphosphate + AMP + H(+). The chain is Ribose-phosphate pyrophosphokinase 5, chloroplastic (PRS5) from Arabidopsis thaliana (Mouse-ear cress).